A 132-amino-acid polypeptide reads, in one-letter code: Mini-ribonuclease 3 (132 aa).

Residue Asp17 is part of the active site.

Belongs to the MrnC RNase family. As to quaternary structure, homodimer. Requires Mg(2+) as cofactor.

The protein localises to the cytoplasm. Its function is as follows. Involved in correct processing of both the 5' and 3' ends of 23S rRNA precursor. Processes 30S rRNA precursor transcript even in absence of ribonuclease 3 (Rnc); Rnc processes 30S rRNA into smaller rRNA precursors. This chain is Mini-ribonuclease 3, found in Enterococcus faecalis (strain ATCC 700802 / V583).